The following is a 256-amino-acid chain: Hydroxyacylglutathione hydrolase (256 aa).

7 residues coordinate Zn(2+): His57, His59, Asp61, His62, His115, Asp134, and His172.

This sequence belongs to the metallo-beta-lactamase superfamily. Glyoxalase II family. In terms of assembly, monomer. Requires Zn(2+) as cofactor.

It carries out the reaction an S-(2-hydroxyacyl)glutathione + H2O = a 2-hydroxy carboxylate + glutathione + H(+). The protein operates within secondary metabolite metabolism; methylglyoxal degradation; (R)-lactate from methylglyoxal: step 2/2. In terms of biological role, thiolesterase that catalyzes the hydrolysis of S-D-lactoyl-glutathione to form glutathione and D-lactic acid. The protein is Hydroxyacylglutathione hydrolase of Rhodospirillum rubrum (strain ATCC 11170 / ATH 1.1.1 / DSM 467 / LMG 4362 / NCIMB 8255 / S1).